The sequence spans 205 residues: ITG-like peptide (205 aa).

Residues 1–15 (MRVYAAITLVLVANT) form the signal peptide. 2 propeptides span residues 16 to 188 (AYIG…TSGE) and 202 to 205 (MPFA).

Expressed throughout the nervous system (at protein level).

It localises to the secreted. The polypeptide is ITG-like peptide (Camponotus floridanus (Florida carpenter ant)).